We begin with the raw amino-acid sequence, 333 residues long: Cell division protein ZipA (333 aa).

Residues 1 to 5 (MQELR) are Periplasmic-facing. The chain crosses the membrane as a helical span at residues 6–26 (LVLILVGALAIAALLFHGLWT). Residues 27–333 (SRKETSSKFG…KQRVKVFCRK (307 aa)) lie on the Cytoplasmic side of the membrane. Positions 72-81 (KEPAFAREEV) are enriched in basic and acidic residues. The disordered stretch occupies residues 72-119 (KEPAFAREEVPTSDDPLFEGTVSSESNKFTQQEKPTVQQAQPQPQPQP). The span at 92–107 (TVSSESNKFTQQEKPT) shows a compositional bias: polar residues. Residues 108–119 (VQQAQPQPQPQP) show a composition bias toward low complexity.

It belongs to the ZipA family. In terms of assembly, interacts with FtsZ via their C-terminal domains.

It is found in the cell inner membrane. Functionally, essential cell division protein that stabilizes the FtsZ protofilaments by cross-linking them and that serves as a cytoplasmic membrane anchor for the Z ring. Also required for the recruitment to the septal ring of downstream cell division proteins. This Aliivibrio fischeri (strain ATCC 700601 / ES114) (Vibrio fischeri) protein is Cell division protein ZipA.